Here is a 213-residue protein sequence, read N- to C-terminus: uncharacterized protein (213 aa).

This is an uncharacterized protein from Escherichia coli (strain K12).